The primary structure comprises 86 residues: Large ribosomal subunit protein bL27 (86 aa).

A disordered region spans residues 1–31 (MAHKKAGGSSRNGRDSAGQRRGVKKFGGEPV).

Belongs to the bacterial ribosomal protein bL27 family.

The protein is Large ribosomal subunit protein bL27 of Desulfotalea psychrophila (strain LSv54 / DSM 12343).